Consider the following 140-residue polypeptide: Callisulfakinin (140 aa).

The first 30 residues, 1-30, serve as a signal peptide directing secretion; it reads MYSQQRIFNSKYFIFFIAVLSIFWLPTMSA. Positions 31 to 109 are excised as a propeptide; sequence RNLENSKNEN…LEYEDEDRSK (79 aa). Tyrosine 114 is modified (sulfotyrosine). Phenylalanine amide is present on phenylalanine 119. Position 131 is a sulfotyrosine (tyrosine 131). Phenylalanine 136 is subject to Phenylalanine amide. The propeptide occupies 139-140; the sequence is SI.

The protein belongs to the gastrin/cholecystokinin family. In terms of tissue distribution, in brain, it is specifically expressed in four pairs of neurons. Not expressed in other cells of the brain and in the thoracico-abdominal ganglion.

It localises to the secreted. In terms of biological role, callisulfakinin I is a neuropeptide. The existence of Callisulfakinin II is uncertain. The chain is Callisulfakinin from Calliphora vomitoria (Blue bottle fly).